Here is a 314-residue protein sequence, read N- to C-terminus: MMMENFKHTTVLLDEAVNGLNIRPDGIYIDGTFGRGGHSRLILSRLGEEGRLLAIDRDPQAIAEAQAINDPRFSIIHGPFSALADYVSERELIGKIDGILLDLGVSSPQLDDAERGFSFMRDGPLDMRMDPTRGQSAAEWLQTAEEADIAWVLKTFGEERFAKRIARAIVERNREQPMTRTKELAEVVAAATPVKDKFKHPATRTFQAVRIWVNSELEEIEQALKSSLSVLAPGGRLSIISFHSLEDRIVKRFMREQSRGPQVPAGLPMTEEQLKKLGGRELRALGKLMPGEEEVAENPRARSSVLRIAERTNA.

S-adenosyl-L-methionine-binding positions include 36-38 (GGH), D56, F80, D102, and Q109.

The protein belongs to the methyltransferase superfamily. RsmH family.

The protein resides in the cytoplasm. The enzyme catalyses cytidine(1402) in 16S rRNA + S-adenosyl-L-methionine = N(4)-methylcytidine(1402) in 16S rRNA + S-adenosyl-L-homocysteine + H(+). Its function is as follows. Specifically methylates the N4 position of cytidine in position 1402 (C1402) of 16S rRNA. This chain is Ribosomal RNA small subunit methyltransferase H, found in Citrobacter koseri (strain ATCC BAA-895 / CDC 4225-83 / SGSC4696).